Reading from the N-terminus, the 295-residue chain is G1/S-specific cyclin-D1 (295 aa).

A Cyclin N-terminal domain is found at 28 to 152; it reads LRAMLKTEET…LLVNKLKWNL (125 aa). A Glycyl lysine isopeptide (Lys-Gly) (interchain with G-Cter in ubiquitin) cross-link involves residue lysine 269. Residues 269–295 form a disordered region; the sequence is KATEEEGEVEEEAGLACTPTDVRDVDI. At threonine 286 the chain carries Phosphothreonine.

This sequence belongs to the cyclin family. Cyclin D subfamily. Interacts with either CDK4 or CDK6 protein kinase to form a serine/threonine kinase holoenzyme complex. The cyclin subunit imparts substrate specificity to the complex. Component of the ternary complex CCND1/CDK4/CDKN1B required for nuclear translocation and modulation of CDK4-mediated kinase activity. Interacts directly with CDKN1B. Can form similar complexes with either CDKN1A or CDKN2A. Interacts with UHRF2; the interaction ubiquitinates CCND1 and appears to occur independently of phosphorylation. Interacts with USP2. Interacts (via cyclin N-terminal domain) with INSM1 (via N-terminal region); the interaction competes with the binding of CCND1 to CDK4 during cell cycle progression and inhibits CDK4 activity. Interacts with CDK4; the interaction is prevented with the binding of CCND1 to INSM1 during cell cycle progression. Phosphorylation at Thr-286 by MAP kinases is required for ubiquitination and degradation by the DCX(AMBRA1) complex. It also plays an essential role for recognition by the FBXO31 component of SCF (SKP1-cullin-F-box) protein ligase complex following DNA damage. In terms of processing, ubiquitinated at Lys-269 by the DCX(AMBRA1) complex during the transition from G1 to S cell phase, leading to its degradation: ubiquitination is dependent on Thr-286 phosphorylation. The DCX(AMBRA1) complex represents the major regulator of CCND1 stability during the G1/S transition. Also ubiquitinated by the SCF(FBXO4) and Cul7-RING(FBXW8) ubiquitin-protein ligase complexes. Following DNA damage it is ubiquitinated by the SCF(FBXO31) protein ligase complex. SCF(FBXO31) ubiquitination is dependent on Thr-286 phosphorylation. Ubiquitinated also by UHRF2 apparently in a phosphorylation-independent manner. Ubiquitination leads to its degradation and G1 arrest. Deubiquitinated by USP2; leading to its stabilization.

Its subcellular location is the nucleus. It is found in the cytoplasm. The protein localises to the nucleus membrane. In terms of biological role, regulatory component of the cyclin D1-CDK4 (DC) complex that phosphorylates and inhibits members of the retinoblastoma (RB) protein family including RB1 and regulates the cell-cycle during G(1)/S transition. Phosphorylation of RB1 allows dissociation of the transcription factor E2F from the RB/E2F complex and the subsequent transcription of E2F target genes which are responsible for the progression through the G(1) phase. Hypophosphorylates RB1 in early G(1) phase. Cyclin D-CDK4 complexes are major integrators of various mitogenenic and antimitogenic signals. Also a substrate for SMAD3, phosphorylating SMAD3 in a cell-cycle-dependent manner and repressing its transcriptional activity. Component of the ternary complex, cyclin D1/CDK4/CDKN1B, required for nuclear translocation and activity of the cyclin D-CDK4 complex. Exhibits transcriptional corepressor activity with INSM1 on the NEUROD1 and INS promoters in a cell cycle-independent manner. The polypeptide is G1/S-specific cyclin-D1 (Ccnd1) (Rattus norvegicus (Rat)).